The sequence spans 328 residues: MIDFTNFYSSIAKNRLSHWLRTLPMQLHEWENTHVHGQLASWIRVLNKFPDIKTSHIELKDRVEIGSATELSPGETKKLENLLQKFHPWRKGPFVIHGIHIDTEWRSDWKWDRLLPHISPLKYRYVLDVGCGSGYHMWRMRGEGAEFVVGIDPSELFLCQFEAVRHFANKEQNVHLLPLGIQELPKLGAFDTVFSMGVLYHRKSPMDHITQLQDQLVEGGELVLETLVIGGDENAVLVPQDRYAKMRNIWFLPSAQALKLWVEKCGFENVRIADINDTLTGEQRSTAWMTNESLEDYLDPNDPSRTVEGYPAPKRALLIAKKAIKALS.

Carboxy-S-adenosyl-L-methionine contacts are provided by residues Lys-91, Trp-105, Lys-110, Gly-130, 152–154, Met-196, Tyr-200, and Arg-315; that span reads DPS.

Belongs to the class I-like SAM-binding methyltransferase superfamily. CmoB family. As to quaternary structure, homotetramer.

It catalyses the reaction carboxy-S-adenosyl-L-methionine + 5-hydroxyuridine(34) in tRNA = 5-carboxymethoxyuridine(34) in tRNA + S-adenosyl-L-homocysteine + H(+). Catalyzes carboxymethyl transfer from carboxy-S-adenosyl-L-methionine (Cx-SAM) to 5-hydroxyuridine (ho5U) to form 5-carboxymethoxyuridine (cmo5U) at position 34 in tRNAs. This Psychromonas ingrahamii (strain DSM 17664 / CCUG 51855 / 37) protein is tRNA U34 carboxymethyltransferase.